The primary structure comprises 956 residues: Zinc fingers and homeoboxes protein 3 (956 aa).

The interval 1–107 (MASKRKSTTP…SEHTDFNKDP (107 aa)) is required for nuclear localization. The interval 22–66 (DASMEAQPAETLPEGPQQDLPPEASAASSEAAQNPSSTDGSTLAN) is disordered. Low complexity predominate over residues 42–58 (PPEASAASSEAAQNPSS). C2H2-type zinc fingers lie at residues 77–100 (YSCKYCDFRSHDMTQFVGHMNSEH) and 109–132 (FVCSGCSFLAKTPEGLSLHNATCH). A required for homodimerization and interaction with NFYA region spans residues 242 to 488 (ASASSAKNPH…LLTACPSITS (247 aa)). Positions 303 to 502 (LSSIPTYNAA…DASIYKNKKS (200 aa)) are required for repressor activity. 2 consecutive DNA-binding regions (homeobox) follow at residues 304–363 (SSIP…GISW) and 494–553 (ASIY…RNLK). A required for nuclear localization region spans residues 497 to 555 (YKNKKSHEQLSALKGSFCRNQFPGQSEVEHLTKVTGLSTREVRKWFSDRRYHCRNLKGS). 2 disordered regions span residues 598–618 (PSAKRQSWHQTPDFTPTKYKE) and 666–695 (KVNAEETKKAEENASQEEEEAAEDEGGEED). Phosphoserine is present on residues serine 599 and serine 604. Residues 612 to 671 (TPTKYKERAPEQLRALESSFAQNPLPLDEELDRLRSETKMTRREIDSWFSERRKKVNAEE) constitute a DNA-binding region (homeobox 3). Basic and acidic residues predominate over residues 666-677 (KVNAEETKKAEE). The segment covering 679 to 695 (ASQEEEEAAEDEGGEED) has biased composition (acidic residues). A phosphoserine mark is found at serine 680, serine 708, and serine 723. DNA-binding regions (homeobox) lie at residues 764 to 823 (PGKV…KNGQ) and 835 to 894 (FPPG…TRAV). A disordered region spans residues 890–956 (ETRAVADTGS…PQAGRQLETD (67 aa)). 2 positions are modified to phosphoserine: serine 927 and serine 946.

It belongs to the ZHX family. Homodimer (via homeobox domain 1). Heterodimer with ZHX1 (via homeobox domain 1). Heterodimer with ZHX2 (via homeobox domain 1). Heterodimerization with ZHX1 is a prerequisite for repressor activity. Interacts with NFYA. In terms of tissue distribution, widely expressed. High expression in kidney. Expressed during osteogenic differentiation.

The protein resides in the nucleus. In terms of biological role, acts as a transcriptional repressor. Involved in the early stages of mesenchymal stem cell (MSC) osteogenic differentiation. Is a regulator of podocyte gene expression during primary glomerula disease. Binds to promoter DNA. This is Zinc fingers and homeoboxes protein 3 (ZHX3) from Homo sapiens (Human).